A 174-amino-acid polypeptide reads, in one-letter code: MTYALFLLSVILVMGFVGFSSKPSPIYGGLVLIISGAVGCAVILNCGGGYMGLVVFLVYLGGMMVVFGYTTAMAIEEYPEAWGSGAEVLVSVLVGLVMEVGLVLWVKECDGVVVAVNFNSVGSWMIYEGEGSGLIREDPIGAGALYDYGRWLVVVTGWTLFVGVYVVIEIARGN.

The next 6 membrane-spanning stretches (helical) occupy residues 1–21 (MTYALFLLSVILVMGFVGFSS), 24–44 (SPIYGGLVLIISGAVGCAVIL), 47–67 (GGGYMGLVVFLVYLGGMMVVF), 86–106 (AEVLVSVLVGLVMEVGLVLWV), 111–131 (GVVVAVNFNSVGSWMIYEGEG), and 151–171 (WLVVVTGWTLFVGVYVVIEIA).

The protein belongs to the complex I subunit 6 family. As to quaternary structure, core subunit of respiratory chain NADH dehydrogenase (Complex I) which is composed of 45 different subunits.

It is found in the mitochondrion inner membrane. The catalysed reaction is a ubiquinone + NADH + 5 H(+)(in) = a ubiquinol + NAD(+) + 4 H(+)(out). Its function is as follows. Core subunit of the mitochondrial membrane respiratory chain NADH dehydrogenase (Complex I) which catalyzes electron transfer from NADH through the respiratory chain, using ubiquinone as an electron acceptor. Essential for the catalytic activity and assembly of complex I. This chain is NADH-ubiquinone oxidoreductase chain 6 (MT-ND6), found in Pongo pygmaeus (Bornean orangutan).